The sequence spans 131 residues: uncharacterized protein (131 aa).

The next 3 helical transmembrane spans lie at 13-35 (RFIK…TFPI), 60-79 (LVAL…TYVC), and 100-119 (LFEI…WNIT).

The protein resides in the membrane. This is an uncharacterized protein from Saccharomyces cerevisiae (strain ATCC 204508 / S288c) (Baker's yeast).